A 226-amino-acid polypeptide reads, in one-letter code: Deoxyribose-phosphate aldolase (226 aa).

Residue Asp-94 is the Proton donor/acceptor of the active site. Lys-156 (schiff-base intermediate with acetaldehyde) is an active-site residue. Lys-185 functions as the Proton donor/acceptor in the catalytic mechanism.

Belongs to the DeoC/FbaB aldolase family. DeoC type 1 subfamily.

Its subcellular location is the cytoplasm. The enzyme catalyses 2-deoxy-D-ribose 5-phosphate = D-glyceraldehyde 3-phosphate + acetaldehyde. Its pathway is carbohydrate degradation; 2-deoxy-D-ribose 1-phosphate degradation; D-glyceraldehyde 3-phosphate and acetaldehyde from 2-deoxy-alpha-D-ribose 1-phosphate: step 2/2. Functionally, catalyzes a reversible aldol reaction between acetaldehyde and D-glyceraldehyde 3-phosphate to generate 2-deoxy-D-ribose 5-phosphate. The protein is Deoxyribose-phosphate aldolase of Burkholderia orbicola (strain MC0-3).